We begin with the raw amino-acid sequence, 941 residues long: MEDNSFLKLSKKIEKILEKNDYLKKKVEQLTKSVDNHEFKIQELLLLLRKNNIHPTTTTTTTTTTNNNSTCVGISNSPPLSPRTSTDSMTNSNNSSATSSTTPSPTQTSTITTTSQIDPNSLTNSNNSFIPINSPISQTTVNNNNNNNNNNNNNNNNNNNNNNNNNNNNLNNQTITSPLSTSSSNSNSNSNSSSPIVSPVSSPQLSGSGNRPRIQFLGNGRMPSTGNLFKKEDSSDSLLKYSKDSEHLYIVPTTPRPSKSPSMDFIASTSLINTVSSNNTDSTNNDNSSILNDQQNQQQNQQQQNQQQQQEEINFITTEDKLPNLPDSNCQWAIIWEYSANDDEWTKALIIVEIDAKPFAKGALRNAYQLKIRSNAMQCFNHFATPIHEKYMEGKKLNLSQIPKLNQNLSLDTLYVAKDSKTSVNFNRYFEDVKMQMVCKSYGERYNSNHPPKKIEFLSAWVIEIQGTTNYRVGNRNSSNNTLYGLELFMKGEFKKQNSNFGTVFTERNTPQSFSHFTYECTTHEMVVVDIQGVDDIYTDPQVHTKDGKGYGEGNLGQKGIEKFLISHKCSPICLQFGLPPIGLETGRNAHRVIRGTMLLPDLTPDLYEPEYPLIENQPSNPLNSELTSIVHLSGHDERVCSLLINQDKTKLYSASADGYVKIWNLTNNEDLSKIQMIDSFRAHRRSIEKMLLNEKYLFTASSDGTIKIWSLPTTTTTTTTSKQSSSSSSSSYECIGKLEDHTAEVNDMCIDIENNFLVSCSFDKQIKIYDLSTFKCIKSLNAHGKSIKSIYMSGKYLFSSSNDQSIKIWDLEMCMCVYGMNDAHDAPITSLRMFGNRLFSASKDGEIKDWNLSTFQPTTTLDQHNMAITDILVTSNGYLFVSSDDSTIRIIDISNQNEPIKIISSTKAHRSGVNSLATDGKRIFSGGCDNLIKVWNWKNK.

Positions 8-48 (KLSKKIEKILEKNDYLKKKVEQLTKSVDNHEFKIQELLLLL) form a coiled coil. Low complexity-rich tracts occupy residues 57 to 70 (TTTT…NNST), 84 to 115 (TSTD…TTTS), and 124 to 206 (NSNN…PQLS). 2 disordered regions span residues 57-234 (TTTT…KEDS) and 276-310 (SSNN…QQQQ). The stretch at 289–317 (SILNDQQNQQQNQQQQNQQQQQEEINFIT) forms a coiled coil. The Alpha-type protein kinase domain maps to 337–582 (EYSANDDEWT…ICLQFGLPPI (246 aa)). 7 WD repeats span residues 635 to 674 (GHDE…DLSK), 683 to 720 (AHRR…TTTT), 741 to 780 (DHTA…CIKS), 783 to 820 (AHGK…CVYG), 824 to 861 (AHDA…PTTT), 864 to 902 (QHNM…EPIK), and 909 to 941 (AHRS…WKNK).

The protein belongs to the protein kinase superfamily. Alpha-type protein kinase family. ALPK subfamily.

The enzyme catalyses L-threonyl-[myosin heavy-chain] + ATP = O-phospho-L-threonyl-[myosin heavy-chain] + ADP + H(+). In terms of biological role, phosphorylates threonine. Not critical for regulating the assembly and disassembly of myosin II filament. In Dictyostelium discoideum (Social amoeba), this protein is Myosin heavy chain kinase D (mhkD).